The sequence spans 464 residues: tRNA modification GTPase MnmE (464 aa).

The (6S)-5-formyl-5,6,7,8-tetrahydrofolate site is built by Arg-27, Glu-89, and Arg-128. In terms of domain architecture, TrmE-type G spans 225–384 (GLATAIVGRP…LEETIAHLFF (160 aa)). Asn-235 lines the K(+) pocket. Residues 235–240 (NVGKSS), 254–260 (TDVAGTT), and 279–282 (DTAG) each bind GTP. Residue Ser-239 coordinates Mg(2+). 3 residues coordinate K(+): Thr-254, Val-256, and Thr-259. Thr-260 is a Mg(2+) binding site. Residue Lys-464 participates in (6S)-5-formyl-5,6,7,8-tetrahydrofolate binding.

This sequence belongs to the TRAFAC class TrmE-Era-EngA-EngB-Septin-like GTPase superfamily. TrmE GTPase family. In terms of assembly, homodimer. Heterotetramer of two MnmE and two MnmG subunits. Requires K(+) as cofactor.

Its subcellular location is the cytoplasm. Its function is as follows. Exhibits a very high intrinsic GTPase hydrolysis rate. Involved in the addition of a carboxymethylaminomethyl (cmnm) group at the wobble position (U34) of certain tRNAs, forming tRNA-cmnm(5)s(2)U34. This Levilactobacillus brevis (strain ATCC 367 / BCRC 12310 / CIP 105137 / JCM 1170 / LMG 11437 / NCIMB 947 / NCTC 947) (Lactobacillus brevis) protein is tRNA modification GTPase MnmE.